Consider the following 557-residue polypeptide: uncharacterized protein (557 aa).

The N-terminal stretch at 1–30 is a signal peptide; sequence MAPRRRRHTRIAGLRVVGTATLVAATTLTA. A lipid anchor (N-palmitoyl cysteine) is attached at C31. C31 is lipidated: S-diacylglycerol cysteine.

This sequence to M.bovis Mb2616c and M.leprae ML0489.

The protein localises to the cell membrane. This is an uncharacterized protein from Mycobacterium tuberculosis (strain ATCC 25618 / H37Rv).